The chain runs to 487 residues: Glutamyl-tRNA(Gln) amidotransferase subunit A (487 aa).

Residues Lys76 and Ser151 each act as charge relay system in the active site. The Acyl-ester intermediate role is filled by Ser175.

This sequence belongs to the amidase family. GatA subfamily. In terms of assembly, heterotrimer of A, B and C subunits.

The catalysed reaction is L-glutamyl-tRNA(Gln) + L-glutamine + ATP + H2O = L-glutaminyl-tRNA(Gln) + L-glutamate + ADP + phosphate + H(+). Allows the formation of correctly charged Gln-tRNA(Gln) through the transamidation of misacylated Glu-tRNA(Gln) in organisms which lack glutaminyl-tRNA synthetase. The reaction takes place in the presence of glutamine and ATP through an activated gamma-phospho-Glu-tRNA(Gln). In Azoarcus sp. (strain BH72), this protein is Glutamyl-tRNA(Gln) amidotransferase subunit A.